We begin with the raw amino-acid sequence, 510 residues long: D-alanine--D-alanyl carrier protein ligase (510 aa).

Residue 157–158 (TS) coordinates ATP. D-alanine is bound at residue D202. 297-302 (NTYGPT) is a binding site for ATP. V306 is a D-alanine binding site. Positions 389 and 498 each coordinate ATP. K498 is a D-alanine binding site.

The protein belongs to the ATP-dependent AMP-binding enzyme family. DltA subfamily.

It is found in the cytoplasm. The enzyme catalyses holo-[D-alanyl-carrier protein] + D-alanine + ATP = D-alanyl-[D-alanyl-carrier protein] + AMP + diphosphate. The protein operates within cell wall biogenesis; lipoteichoic acid biosynthesis. Catalyzes the first step in the D-alanylation of lipoteichoic acid (LTA), the activation of D-alanine and its transfer onto the D-alanyl carrier protein (Dcp) DltC. In an ATP-dependent two-step reaction, forms a high energy D-alanyl-AMP intermediate, followed by transfer of the D-alanyl residue as a thiol ester to the phosphopantheinyl prosthetic group of the Dcp. D-alanylation of LTA plays an important role in modulating the properties of the cell wall in Gram-positive bacteria, influencing the net charge of the cell wall. The protein is D-alanine--D-alanyl carrier protein ligase of Listeria monocytogenes serotype 4b (strain F2365).